The sequence spans 551 residues: Glucans biosynthesis protein D (551 aa).

Residues 1-32 constitute a signal peptide (tat-type signal); the sequence is MNRRRFIKASLALAAACGTPGLATLFSRNAWA.

This sequence belongs to the OpgD/OpgG family. Predicted to be exported by the Tat system. The position of the signal peptide cleavage has not been experimentally proven.

The protein localises to the periplasm. The protein operates within glycan metabolism; osmoregulated periplasmic glucan (OPG) biosynthesis. Functionally, probably involved in the control of the structural glucose backbone of osmoregulated periplasmic glucans (OPGs). This Cronobacter sakazakii (strain ATCC BAA-894) (Enterobacter sakazakii) protein is Glucans biosynthesis protein D.